The sequence spans 99 residues: Aspartyl/glutamyl-tRNA(Asn/Gln) amidotransferase subunit C (99 aa).

It belongs to the GatC family. Heterotrimer of A, B and C subunits.

The catalysed reaction is L-glutamyl-tRNA(Gln) + L-glutamine + ATP + H2O = L-glutaminyl-tRNA(Gln) + L-glutamate + ADP + phosphate + H(+). It carries out the reaction L-aspartyl-tRNA(Asn) + L-glutamine + ATP + H2O = L-asparaginyl-tRNA(Asn) + L-glutamate + ADP + phosphate + 2 H(+). Allows the formation of correctly charged Asn-tRNA(Asn) or Gln-tRNA(Gln) through the transamidation of misacylated Asp-tRNA(Asn) or Glu-tRNA(Gln) in organisms which lack either or both of asparaginyl-tRNA or glutaminyl-tRNA synthetases. The reaction takes place in the presence of glutamine and ATP through an activated phospho-Asp-tRNA(Asn) or phospho-Glu-tRNA(Gln). The chain is Aspartyl/glutamyl-tRNA(Asn/Gln) amidotransferase subunit C from Orientia tsutsugamushi (strain Ikeda) (Rickettsia tsutsugamushi).